The sequence spans 353 residues: Cellulose-complementing protein (353 aa).

Disordered regions lie at residues 1 to 21, 75 to 94, and 117 to 337; these read MSASGSDEVAGGGQAGSPQDF, PQIAVAPPPPPVVPDPPAIV, and AVPA…SPRP. Residues 80 to 91 are compositionally biased toward pro residues; the sequence is APPPPPVVPDPP. Low complexity-rich tracts occupy residues 117 to 132 and 142 to 164; these read AVPAEPPVQEAPVQAA and IAEQAPPAAPDPASVPYANVAAA. Residues 165–175 show a composition bias toward pro residues; the sequence is PVPPDPAPVTP. 2 stretches are compositionally biased toward polar residues: residues 196 to 226 and 278 to 304; these read QVRTVQEGATPSRVPSRSMNAFPRTSASSIS and STRSVRSNVSRMTSMTKTDTNSSQASR.

In Komagataeibacter xylinus (Gluconacetobacter xylinus), this protein is Cellulose-complementing protein (ccpAX).